Here is a 512-residue protein sequence, read N- to C-terminus: Lysine--tRNA ligase (512 aa).

Glu-408 and Glu-415 together coordinate Mg(2+).

Belongs to the class-II aminoacyl-tRNA synthetase family. Homodimer. Mg(2+) serves as cofactor.

It localises to the cytoplasm. It catalyses the reaction tRNA(Lys) + L-lysine + ATP = L-lysyl-tRNA(Lys) + AMP + diphosphate. The polypeptide is Lysine--tRNA ligase (Prochlorococcus marinus (strain MIT 9301)).